Consider the following 207-residue polypeptide: Ribosomal RNA large subunit methyltransferase E (207 aa).

Positions 60, 62, 80, 96, and 121 each coordinate S-adenosyl-L-methionine. The active-site Proton acceptor is Lys-161.

This sequence belongs to the class I-like SAM-binding methyltransferase superfamily. RNA methyltransferase RlmE family.

It is found in the cytoplasm. The enzyme catalyses uridine(2552) in 23S rRNA + S-adenosyl-L-methionine = 2'-O-methyluridine(2552) in 23S rRNA + S-adenosyl-L-homocysteine + H(+). Functionally, specifically methylates the uridine in position 2552 of 23S rRNA at the 2'-O position of the ribose in the fully assembled 50S ribosomal subunit. This Pseudomonas paraeruginosa (strain DSM 24068 / PA7) (Pseudomonas aeruginosa (strain PA7)) protein is Ribosomal RNA large subunit methyltransferase E.